Here is a 526-residue protein sequence, read N- to C-terminus: Phosphoenolpyruvate carboxykinase (ATP) (526 aa).

Substrate contacts are provided by R55, Y190, and K196. Residues K196, H215, and 231–239 each bind ATP; that span reads GLSGTGKTT. 2 residues coordinate Mn(2+): K196 and H215. D252 lines the Mn(2+) pocket. Positions 280, 317, and 442 each coordinate ATP. R317 provides a ligand contact to substrate.

This sequence belongs to the phosphoenolpyruvate carboxykinase (ATP) family. The cofactor is Mn(2+).

The protein localises to the cytoplasm. It catalyses the reaction oxaloacetate + ATP = phosphoenolpyruvate + ADP + CO2. Its pathway is carbohydrate biosynthesis; gluconeogenesis. In terms of biological role, involved in the gluconeogenesis. Catalyzes the conversion of oxaloacetate (OAA) to phosphoenolpyruvate (PEP) through direct phosphoryl transfer between the nucleoside triphosphate and OAA. In Alkaliphilus oremlandii (strain OhILAs) (Clostridium oremlandii (strain OhILAs)), this protein is Phosphoenolpyruvate carboxykinase (ATP).